The chain runs to 106 residues: Large ribosomal subunit protein eL42 (106 aa).

A disordered region spans residues 34–53 (YAQGRRRYDRKRSGYGGQTK). The residue at position 53 (Lys53) is an N6-methyllysine.

It belongs to the eukaryotic ribosomal protein eL42 family.

It localises to the cytoplasm. In Pongo abelii (Sumatran orangutan), this protein is Large ribosomal subunit protein eL42 (RPL36AL).